A 492-amino-acid chain; its full sequence is Catalase (492 aa).

Active-site residues include His-65 and Asn-138. Tyr-348 is a heme binding site.

This sequence belongs to the catalase family. Homotetramer. Heme is required as a cofactor.

Its subcellular location is the cytoplasm. The protein localises to the cytosol. The protein resides in the peroxisome matrix. The enzyme catalyses 2 H2O2 = O2 + 2 H2O. Its function is as follows. Catalyzes the degradation of hydrogen peroxide (H(2)O(2)) generated by peroxisomal oxidases to water and oxygen, thereby protecting cells from the toxic effects of hydrogen peroxide. In Soldanella alpina (Alpine snowbell), this protein is Catalase.